Here is a 224-residue protein sequence, read N- to C-terminus: Transcriptional regulatory protein TctD (224 aa).

One can recognise a Response regulatory domain in the interval 2–116 (RLLLAEDNRE…ELDARLRALL (115 aa)). Aspartate 51 carries the 4-aspartylphosphate modification. Residues 121–219 (GQVHEVQQLG…LRGLGYVLER (99 aa)) constitute a DNA-binding region (ompR/PhoB-type).

In terms of biological role, transcriptional activator of the tctI tricarboxylate transport system operon. The protein is Transcriptional regulatory protein TctD (tctD) of Salmonella typhimurium (strain SL1344).